Here is an 811-residue protein sequence, read N- to C-terminus: MSSATSLVPPAAPDMREHELGECAAFYAAETPQRLFENLLHLENALKARGYDTDSAGAPALGPTTLTMEAIADRITLIINRFKAAVRLDLELYRLLAELVHIRIRTKTVSMQAWIELRGLSRECAEFILERKNFVCELMERFGEVYPTLSRVGLQSARKFESMYLGKLKNGRLESVGQFFLRIAAEAARGVANNDAFAAAVFRDGTRAPDANTVFCLFFMALCRQEIVPPTPVMLFAGTESRSYASCFLLDVRGRHTRDVLTSIAEEIIPVMHSHGGIGLYMDCDSNWDDNSSGMMLALKALDSIIAASNAVSARPSGLCVYVEPWHRDIMKILRCRGVLAGNEETRCDNTFFALWMPDLFMKRFEANGTWTLFDGRAAHLSDLYGEEFEKEYELLERKNVGIATYPARDVMFALIKSAVSTGTPFVMFKHAVNRNYFFDMAGRAMKCSNLCTEIVHMTDDESVGVCNLTSLNLAAFVTRRNALPGTPPIGTFDYSSFRDACAVATVFINALMSLSNLPIKRATTGNERLRSIGIGVQGFHTACLLQGFGLDSVEACRFNGKLFEALALTTFQTSCRICELGMNPFRGFSESKYAKGWLHMDGWPARHLYFDGWDRLRENIKAYGLYNCQLVALMPTASSSQLTEVSEGIHPVFGNIFSKITTTGEDIQLNVALMETIECLYPNKAERRDILERLHKNKWSTRGAFGAALPSQHPLTKFDTAFEADQEHLLRLSADRAPFVDHSQSTTLYVVEEDDGAVRASRVAHLLTTAFKYGLKTGMYYCKVRKATDNGVFLGTDTCRRDDPTCLACQ.

Substrate contacts are provided by residues T231, 246-247 (SC), G277, 450-454 (NLCTE), and 636-640 (PTASS). C247 and C467 are joined by a disulfide. The Proton acceptor role is filled by N450. The Cysteine radical intermediate role is filled by C452. The active-site Proton acceptor is E454.

It belongs to the ribonucleoside diphosphate reductase large chain family. In terms of assembly, heterotetramer composed of a homodimer of the large subunit (R1) and a homodimer of the small subunit (R2). Larger multisubunit protein complex are also active, composed of (R1)n(R2)n.

The enzyme catalyses a 2'-deoxyribonucleoside 5'-diphosphate + [thioredoxin]-disulfide + H2O = a ribonucleoside 5'-diphosphate + [thioredoxin]-dithiol. In terms of biological role, ribonucleoside-diphosphate reductase holoenzyme provides the precursors necessary for viral DNA synthesis. Allows virus growth in non-dividing cells, as well as reactivation from latency in infected hosts. Catalyzes the biosynthesis of deoxyribonucleotides from the corresponding ribonucleotides. This is Ribonucleoside-diphosphate reductase large subunit from Amazona oratrix (yellow-headed parrot).